Consider the following 384-residue polypeptide: S-adenosylmethionine synthase (384 aa).

Residue histidine 15 participates in ATP binding. Mg(2+) is bound at residue aspartate 17. Residue glutamate 43 participates in K(+) binding. Glutamate 56 and glutamine 99 together coordinate L-methionine. The segment at 99–109 (QSPDINQGVDR) is flexible loop. ATP is bound by residues 164–166 (DAK), 230–231 (RF), aspartate 239, 245–246 (RK), alanine 262, and lysine 266. Aspartate 239 serves as a coordination point for L-methionine. Lysine 270 serves as a coordination point for L-methionine.

Belongs to the AdoMet synthase family. Homotetramer; dimer of dimers. Mg(2+) is required as a cofactor. K(+) serves as cofactor.

The protein resides in the cytoplasm. It catalyses the reaction L-methionine + ATP + H2O = S-adenosyl-L-methionine + phosphate + diphosphate. The protein operates within amino-acid biosynthesis; S-adenosyl-L-methionine biosynthesis; S-adenosyl-L-methionine from L-methionine: step 1/1. In terms of biological role, catalyzes the formation of S-adenosylmethionine (AdoMet) from methionine and ATP. The overall synthetic reaction is composed of two sequential steps, AdoMet formation and the subsequent tripolyphosphate hydrolysis which occurs prior to release of AdoMet from the enzyme. The polypeptide is S-adenosylmethionine synthase (Salmonella heidelberg (strain SL476)).